We begin with the raw amino-acid sequence, 390 residues long: Mannitol-1-phosphate 5-dehydrogenase (390 aa).

NAD(+) is bound at residue 7–18 (AVHFGGGNIGRG). Residue lysine 216 is part of the active site.

This sequence belongs to the mannitol dehydrogenase family. As to quaternary structure, monomer.

The catalysed reaction is D-mannitol 1-phosphate + NAD(+) = beta-D-fructose 6-phosphate + NADH + H(+). Catalyzes the NAD(H)-dependent interconversion of D-fructose 6-phosphate and D-mannitol 1-phosphate in the mannitol metabolic pathway. Required for the process of sporulation on senescing leaf material. In Phaeosphaeria nodorum (strain SN15 / ATCC MYA-4574 / FGSC 10173) (Glume blotch fungus), this protein is Mannitol-1-phosphate 5-dehydrogenase (mpd1).